The chain runs to 784 residues: Toll-like receptor 2 (784 aa).

Positions 1–20 are cleaved as a signal peptide; sequence MPHTLWMVWVLGVIISLSKE. The Extracellular portion of the chain corresponds to 21–587; sequence ESSNQASLSC…VRLSVSECHR (567 aa). Cysteines 30 and 36 form a disulfide. LRR repeat units lie at residues 54–77, 78–101, 102–125, 126–150, 151–175, 176–199, 200–223, 224–250, 251–278, 279–308, 309–337, 338–361, 362–388, 389–414, 415–437, 438–457, 458–478, 479–500, and 501–524; these read VKSL…RCVN, LQAL…SLGS, LEHL…PLSS, LTFL…HLTK, LQIL…GLTF, LEEL…SIQN, VSHL…VTSS, VECL…TNSL, IKKF…QISG, LLEL…DPGK, VETL…LTER, VKRI…HLKS, LEYL…AWPS, LQTL…TLKN, LTNV…WPEK, MKYL…CIPK, TLEI…NLPQ, LKEL…LLPM, and LLVL…SFHT. Residue Asn-114 is glycosylated (N-linked (GlcNAc...) asparagine). A glycan (N-linked (GlcNAc...) asparagine) is linked at Asn-199. A disulfide bridge links Cys-353 with Cys-382. Residue Asn-414 is glycosylated (N-linked (GlcNAc...) asparagine). Cys-432 and Cys-454 are oxidised to a cystine. Residue Asn-442 is glycosylated (N-linked (GlcNAc...) asparagine). The LRRCT domain maps to 525–579; that stretch reads LKTLEAGGNNFICSCEFLSFTQEQQALAKVLIDWPANYLCDSPSHVRGQQVQDVR. Residues 588–608 traverse the membrane as a helical segment; that stretch reads TALVSGMCCALFLLILLTGVL. The Cytoplasmic portion of the chain corresponds to 609-784; that stretch reads CHRFHGLWYM…WVNLRAAIKS (176 aa). Residues 639-782 form the TIR domain; it reads ICYDAFVSYS…GFWVNLRAAI (144 aa). A Glycyl lysine isopeptide (Lys-Gly) (interchain with G-Cter in ubiquitin) cross-link involves residue Lys-754. The short motif at 761–778 is the ATG16L1-binding motif element; sequence YLEWPMDEAQREGFWVNL.

Belongs to the Toll-like receptor family. As to quaternary structure, interacts with LY96, TLR1 and TLR6 (via extracellular domain). TLR2 seems to exist in heterodimers with either TLR1 or TLR6 before stimulation by the ligand. The heterodimers form bigger oligomers in response to their corresponding ligands as well as further heterotypic associations with other receptors such as CD14 and/or CD36. Binds MYD88 (via TIR domain). Interacts with TICAM1. Interacts with CNPY3. Interacts with ATG16L1. Interacts with PPP1R11. Interacts with TICAM2. Interacts with TIRAP. Post-translationally, ubiquitinated at Lys-754 by PPP1R11, leading to its degradation. Deubiquitinated by USP2. Glycosylation of Asn-442 is critical for secretion of the N-terminal ectodomain of TLR2.

It is found in the membrane. The protein resides in the cytoplasmic vesicle. It localises to the phagosome membrane. The protein localises to the membrane raft. Its function is as follows. Cooperates with LY96 to mediate the innate immune response to bacterial lipoproteins and other microbial cell wall components. Cooperates with TLR1 or TLR6 to mediate the innate immune response to bacterial lipoproteins or lipopeptides. Acts via MYD88 and TRAF6, leading to NF-kappa-B activation, cytokine secretion and the inflammatory response. May also promote apoptosis in response to lipoproteins. Forms activation clusters composed of several receptors depending on the ligand, these clusters trigger signaling from the cell surface and subsequently are targeted to the Golgi in a lipid-raft dependent pathway. Forms the cluster TLR2:TLR6:CD14:CD36 in response to diacylated lipopeptides and TLR2:TLR1:CD14 in response to triacylated lipopeptides. The chain is Toll-like receptor 2 (TLR2) from Pan troglodytes (Chimpanzee).